The chain runs to 324 residues: Succinylglutamate desuccinylase (324 aa).

The Zn(2+) site is built by H53, E56, and H148. Residue E211 is part of the active site.

This sequence belongs to the AspA/AstE family. Succinylglutamate desuccinylase subfamily. Requires Zn(2+) as cofactor.

It catalyses the reaction N-succinyl-L-glutamate + H2O = L-glutamate + succinate. It participates in amino-acid degradation; L-arginine degradation via AST pathway; L-glutamate and succinate from L-arginine: step 5/5. Its function is as follows. Transforms N(2)-succinylglutamate into succinate and glutamate. This Acinetobacter baumannii (strain SDF) protein is Succinylglutamate desuccinylase.